The following is a 407-amino-acid chain: Argininosuccinate synthase (407 aa).

ATP contacts are provided by residues 12–20 and A39; that span reads AYSGGLDTS. L-citrulline contacts are provided by Y92 and S97. G122 is a binding site for ATP. Residues T124, N128, and D129 each contribute to the L-aspartate site. Residue N128 coordinates L-citrulline. 5 residues coordinate L-citrulline: R132, S182, S191, E267, and Y279.

The protein belongs to the argininosuccinate synthase family. Type 1 subfamily. In terms of assembly, homotetramer.

It is found in the cytoplasm. It catalyses the reaction L-citrulline + L-aspartate + ATP = 2-(N(omega)-L-arginino)succinate + AMP + diphosphate + H(+). It functions in the pathway amino-acid biosynthesis; L-arginine biosynthesis; L-arginine from L-ornithine and carbamoyl phosphate: step 2/3. The chain is Argininosuccinate synthase from Campylobacter fetus subsp. fetus (strain 82-40).